Here is a 231-residue protein sequence, read N- to C-terminus: GSK-3-binding protein FRAT2 (231 aa).

Disordered stretches follow at residues 1 to 24 (MPCRREEEEEAGDEAEGEEDDDSF) and 53 to 109 (DTAH…PGAV). The span at 7–23 (EEEEAGDEAEGEEDDDS) shows a compositional bias: acidic residues. The tract at residues 172-194 (DPHRLLQQLVLSGNLIKEAVRRL) is involved in GSK-3 binding. Positions 203-231 (ATSPASAPGSGGGRSGPDSVTLQPSGAWL) are disordered.

This sequence belongs to the GSK-3-binding protein family. In terms of assembly, binds GSK-3 and prevents GSK-3-dependent phosphorylation.

Functionally, positively regulates the Wnt signaling pathway by stabilizing beta-catenin through the association with GSK-3. The protein is GSK-3-binding protein FRAT2 (Frat2) of Mus musculus (Mouse).